We begin with the raw amino-acid sequence, 247 residues long: 23S rRNA (guanosine-2'-O-)-methyltransferase RlmB (247 aa).

S-adenosyl-L-methionine contacts are provided by glycine 197, isoleucine 217, and leucine 226.

It belongs to the class IV-like SAM-binding methyltransferase superfamily. RNA methyltransferase TrmH family. RlmB subfamily.

Its subcellular location is the cytoplasm. It carries out the reaction guanosine(2251) in 23S rRNA + S-adenosyl-L-methionine = 2'-O-methylguanosine(2251) in 23S rRNA + S-adenosyl-L-homocysteine + H(+). Its function is as follows. Specifically methylates the ribose of guanosine 2251 in 23S rRNA. This is 23S rRNA (guanosine-2'-O-)-methyltransferase RlmB from Vibrio cholerae serotype O1 (strain ATCC 39315 / El Tor Inaba N16961).